Consider the following 1659-residue polypeptide: Vitellogenin (1659 aa).

An N-terminal signal peptide occupies residues 1–15; the sequence is MRAVVLALTLALVAS. The Vitellogenin domain maps to 24-662; that stretch reads FAASKTYVYK…DAATLFPRTV (639 aa). Asn-1089 carries an N-linked (GlcNAc...) asparagine glycan. Low complexity-rich tracts occupy residues 1090-1111 and 1119-1129; these read GTRA…SSSR and SSSSSSSSSSR. Residues 1090-1163 form a disordered region; it reads GTRASSSSSS…SQSTSNVISR (74 aa). In terms of domain architecture, VWFD spans 1389-1565; the sequence is VKCSMVRDTL…SWVLPSDSCR (177 aa). Disulfide bonds link Cys-1391/Cys-1528 and Cys-1414/Cys-1564. Asn-1627 carries an N-linked (GlcNAc...) asparagine glycan.

Post-translationally, phosvitin, an egg yolk storage protein, is one of the most highly phosphorylated (10%) proteins in nature. Produced by the liver, secreted into the blood and then sequestered by receptor mediated endocytosis into growing oocytes, where it is generally cleaved, giving rise to the respective yolk components lipovitellin-I, phosvitin, lipovitellin-II.

Its function is as follows. Precursor of the major egg-yolk proteins that are sources of nutrients during early development of oviparous organisms. In Oncorhynchus mykiss (Rainbow trout), this protein is Vitellogenin (vtg1).